The sequence spans 571 residues: Urease subunit alpha (571 aa).

Positions 129 to 571 (GGIDTHIHFI…LPMAQRYFLF (443 aa)) constitute a Urease domain. Residues His134, His136, and Lys217 each coordinate Ni(2+). N6-carboxylysine is present on Lys217. His219 provides a ligand contact to substrate. The Ni(2+) site is built by His246 and His272. His320 functions as the Proton donor in the catalytic mechanism. Position 360 (Asp360) interacts with Ni(2+).

Belongs to the metallo-dependent hydrolases superfamily. Urease alpha subunit family. In terms of assembly, heterotrimer of UreA (gamma), UreB (beta) and UreC (alpha) subunits. Three heterotrimers associate to form the active enzyme. Requires Ni cation as cofactor. Post-translationally, carboxylation allows a single lysine to coordinate two nickel ions.

Its subcellular location is the cytoplasm. The enzyme catalyses urea + 2 H2O + H(+) = hydrogencarbonate + 2 NH4(+). The protein operates within nitrogen metabolism; urea degradation; CO(2) and NH(3) from urea (urease route): step 1/1. In Cupriavidus pinatubonensis (strain JMP 134 / LMG 1197) (Cupriavidus necator (strain JMP 134)), this protein is Urease subunit alpha.